The sequence spans 184 residues: ATP synthase subunit b (184 aa).

Residues 4-24 form a helical membrane-spanning segment; sequence LSVLFALVASPALAASGPFFS.

Belongs to the ATPase B chain family. F-type ATPases have 2 components, F(1) - the catalytic core - and F(0) - the membrane proton channel. F(1) has five subunits: alpha(3), beta(3), gamma(1), delta(1), epsilon(1). F(0) has three main subunits: a(1), b(2) and c(10-14). The alpha and beta chains form an alternating ring which encloses part of the gamma chain. F(1) is attached to F(0) by a central stalk formed by the gamma and epsilon chains, while a peripheral stalk is formed by the delta and b chains.

Its subcellular location is the cell inner membrane. F(1)F(0) ATP synthase produces ATP from ADP in the presence of a proton or sodium gradient. F-type ATPases consist of two structural domains, F(1) containing the extramembraneous catalytic core and F(0) containing the membrane proton channel, linked together by a central stalk and a peripheral stalk. During catalysis, ATP synthesis in the catalytic domain of F(1) is coupled via a rotary mechanism of the central stalk subunits to proton translocation. Functionally, component of the F(0) channel, it forms part of the peripheral stalk, linking F(1) to F(0). This chain is ATP synthase subunit b, found in Paracoccus denitrificans (strain Pd 1222).